We begin with the raw amino-acid sequence, 271 residues long: 5-deoxy-glucuronate isomerase (271 aa).

The protein belongs to the isomerase IolB family.

The catalysed reaction is 5-deoxy-D-glucuronate = 5-dehydro-2-deoxy-D-gluconate. It participates in polyol metabolism; myo-inositol degradation into acetyl-CoA; acetyl-CoA from myo-inositol: step 4/7. Involved in the isomerization of 5-deoxy-glucuronate (5DG) to 5-dehydro-2-deoxy-D-gluconate (DKG or 2-deoxy-5-keto-D-gluconate). This Bacillus subtilis subsp. natto protein is 5-deoxy-glucuronate isomerase.